Here is a 102-residue protein sequence, read N- to C-terminus: ATP-dependent Clp protease adapter protein ClpS (102 aa).

Belongs to the ClpS family. In terms of assembly, binds to the N-terminal domain of the chaperone ClpA.

Involved in the modulation of the specificity of the ClpAP-mediated ATP-dependent protein degradation. The polypeptide is ATP-dependent Clp protease adapter protein ClpS (Shewanella frigidimarina (strain NCIMB 400)).